A 244-amino-acid chain; its full sequence is Tegument protein UL51 (244 aa).

Cys-9 carries the S-palmitoyl cysteine; by host lipid modification. The segment at 178–244 is disordered; the sequence is GVTEAPSLGH…SRAAPCVLGQ (67 aa). Residues 221 to 244 are compositionally biased toward low complexity; that stretch reads PRPTASPTAPRPGPSRAAPCVLGQ.

The protein belongs to the herpesviridae UL51 family. In terms of assembly, oligomerizes. Interacts with UL7; this interaction mediates UL7 incorporation to virions. Interacts with UL14. Phosphorylated. Post-translationally, palmitoylation is necessary for Golgi localization.

It localises to the virion tegument. The protein localises to the host cytoplasm. The protein resides in the host Golgi apparatus. In terms of biological role, plays several roles during the time course of infection, including egress of virus particles from the perinuclear space and secondary envelopment of cytoplasmic capsids that bud into specific trans-Golgi network (TGN)-derived membranes. Plays also an essential role in the maintenance of host cytoplasmic viral assembly center (cVAC) morphology in primary host neuronal cells. This chain is Tegument protein UL51, found in Homo sapiens (Human).